A 704-amino-acid polypeptide reads, in one-letter code: Elongation factor G (704 aa).

The tr-type G domain maps to 10-286 (KKVRNIGIMA…AVIDFLPNPM (277 aa)). GTP-binding positions include 19-26 (AHIDAGKT), 83-87 (DTPGH), and 137-140 (NKMD).

Belongs to the TRAFAC class translation factor GTPase superfamily. Classic translation factor GTPase family. EF-G/EF-2 subfamily.

The protein localises to the cytoplasm. Its function is as follows. Catalyzes the GTP-dependent ribosomal translocation step during translation elongation. During this step, the ribosome changes from the pre-translocational (PRE) to the post-translocational (POST) state as the newly formed A-site-bound peptidyl-tRNA and P-site-bound deacylated tRNA move to the P and E sites, respectively. Catalyzes the coordinated movement of the two tRNA molecules, the mRNA and conformational changes in the ribosome. This chain is Elongation factor G, found in Corynebacterium jeikeium (strain K411).